Here is a 248-residue protein sequence, read N- to C-terminus: B-box zinc finger protein 24 (248 aa).

Zn(2+) contacts are provided by Cys-5, Cys-8, Cys-28, His-33, Cys-57, Cys-60, Cys-80, and His-85. The segment at 5–47 (CDVCEKAPATVICCADEAALCPQCDIEIHAANKLASKHQRLHL) adopts a B box-type 1; atypical zinc-finger fold. The segment at 57–99 (CDICQEKAAFIFCVEDRALLCRDCDESIHVANSRSANHQRFLA) adopts a B box-type 2; atypical zinc-finger fold. The disordered stretch occupies residues 115 to 148 (IEKNQPEPSNNQQKANQIPAKSTSQQQQQPSSAT). Over residues 120–130 (PEPSNNQQKAN) the composition is skewed to polar residues. Residues 131 to 148 (QIPAKSTSQQQQQPSSAT) show a composition bias toward low complexity. The short motif at 226-229 (KKPR) is the Nuclear localization signal element. The interaction with COP1 stretch occupies residues 236 to 248 (DDDEEHFIVPDLG).

In terms of assembly, interacts with COP1 WD40 domain. Interacts with HY5 and HYH. Interacts with RCD1 and TRP4. Post-translationally, COP1-mediated ubiquitination and subsequent proteasomal degradation of BBX24/STO occurs in the dark. As to expression, high expression in leaves and lower in roots and flowers.

The protein resides in the nucleus. Functionally, acts as a negative regulator of seedling photomorphogenesis and light-regulated inhibition of hypocotyl elongation. BBX24/STO and BBX25/STH function as transcriptional corepressors of HY5 activity, leading to the down-regulation of BBX22 expression. BBX24/STO acts additively with BBX25/STH during de-etiolation and the hypocotyl shade avoidance response. Functions as a negative regulator of photomorphogenic UV-B responses by interacting with both COP1 and HY5. May act as a transcription factor in the salt-stress response. The sequence is that of B-box zinc finger protein 24 from Arabidopsis thaliana (Mouse-ear cress).